A 141-amino-acid polypeptide reads, in one-letter code: Galactose-6-phosphate isomerase subunit LacA (141 aa).

It belongs to the LacAB/RpiB family. In terms of assembly, heteromultimeric protein consisting of LacA and LacB.

It carries out the reaction aldehydo-D-galactose 6-phosphate = keto-D-tagatose 6-phosphate. The protein operates within carbohydrate metabolism; D-galactose 6-phosphate degradation; D-tagatose 6-phosphate from D-galactose 6-phosphate: step 1/1. The sequence is that of Galactose-6-phosphate isomerase subunit LacA from Streptococcus agalactiae serotype Ia (strain ATCC 27591 / A909 / CDC SS700).